A 316-amino-acid chain; its full sequence is Phosphate acyltransferase (316 aa).

Belongs to the PlsX family. As to quaternary structure, homodimer. Probably interacts with PlsY.

It is found in the cytoplasm. It catalyses the reaction a fatty acyl-[ACP] + phosphate = an acyl phosphate + holo-[ACP]. Its pathway is lipid metabolism; phospholipid metabolism. Functionally, catalyzes the reversible formation of acyl-phosphate (acyl-PO(4)) from acyl-[acyl-carrier-protein] (acyl-ACP). This enzyme utilizes acyl-ACP as fatty acyl donor, but not acyl-CoA. The protein is Phosphate acyltransferase of Chlamydia abortus (strain DSM 27085 / S26/3) (Chlamydophila abortus).